Reading from the N-terminus, the 62-residue chain is MKVNDRVTVKTDGGPRRPGVVLAVEEFNEGTMYLVSLEDYPLGIWFFNESGHPDGIFVEKME.

It belongs to the DsrB family.

In Escherichia fergusonii (strain ATCC 35469 / DSM 13698 / CCUG 18766 / IAM 14443 / JCM 21226 / LMG 7866 / NBRC 102419 / NCTC 12128 / CDC 0568-73), this protein is Protein DsrB.